Consider the following 393-residue polypeptide: Dwarfin sma-3 (393 aa).

The MH1 domain occupies 10–139 (PAVKKLLGWK…YQRLSRPQGL (130 aa)). Residues Cys65, Cys110, Cys124, and His129 each contribute to the Zn(2+) site. The segment at 136–190 (PQGLNSSMPSPQPISSPNTIWQSSGSSTASCASSPSPSVFSEDGGEVQVHQRPPP) is disordered. Over residues 141 to 176 (SSMPSPQPISSPNTIWQSSGSSTASCASSPSPSVFS) the composition is skewed to low complexity. An MH2 domain is found at 197–393 (WAQITYFELN…TNLMEPNSMT (197 aa)).

It belongs to the dwarfin/SMAD family.

It is found in the cytoplasm. It localises to the nucleus. In terms of biological role, involved in TGF-beta pathway. Plays a role in male tail tip morphogenesis. In Caenorhabditis elegans, this protein is Dwarfin sma-3.